We begin with the raw amino-acid sequence, 510 residues long: DNA nucleotidylexotransferase (510 aa).

Positions 1–22 (MDPLQAVHLGPRKKRPRQLGTP) are disordered. A Nuclear localization signal motif is present at residues 11–17 (PRKKRPR). The region spanning 27 to 124 (PYDIRFRDLV…KPVEMMGRHQ (98 aa)) is the BRCT domain. Ser-134 carries the post-translational modification Phosphoserine. Residues 151 to 510 (SQYACQRRTT…DYIEPWERNA (360 aa)) are mediates interaction with DNTTIP2. The interval 258 to 262 (VGLKT) is involved in DNA binding. Residues 333-338 (GFRRGK) and 342-345 (HDVD) contribute to the a 2'-deoxyribonucleoside 5'-triphosphate site. Mg(2+)-binding residues include Asp-343, Asp-345, and Asp-434. A 2'-deoxyribonucleoside 5'-triphosphate is bound at residue 449 to 450 (GW).

The protein belongs to the DNA polymerase type-X family. As to quaternary structure, interacts with PRP19 and DNTTIP1. Forms a ternary complex with DNTTIP2 and core histone. Released from this complex by PCNA. Interacts with TRERF1. Mg(2+) serves as cofactor. In terms of tissue distribution, isoform TDT-L: Expressed in the thymus, and, at lower levels, in the bone marrow. Detected in both cycling and noncycling pro-B and pre-B cells (at protein level). Isoform TDT-S: Expressed in both cycling and noncycling pro-B, but not pre-B, cells (at protein level). Not detected in mature peripheral or germinal center B cells.

It localises to the nucleus. The protein localises to the cytoplasm. It carries out the reaction DNA(n) + a 2'-deoxyribonucleoside 5'-triphosphate = DNA(n+1) + diphosphate. Its function is as follows. Transferase that catalyzes the nontemplated addition of nucleoside triphosphate to coding ends during V(D)J recombination (N addition). Involved in the generation of diversity in the antigen-binding region of immunoglobulin heavy and light chains and T-cell receptors during B- and T-cell development. Does not act on double-stranded DNA with blunt ends. 3'-to-5' DNA exonuclease. Involved in the generation of diversity in the antigen-binding region of immunoglobulin heavy and light chains and T-cell receptors during B- and T-cell development. Acts on single-stranded and double-stranded DNA with 3' or 5' extensions, but not on double-stranded DNA with blunt ends. Attenuates not only isoform TDT-S-catalyzed N addition, but also P (palindromic) addition in coding joins. Lacks terminal transferase activity. This chain is DNA nucleotidylexotransferase (Dntt), found in Mus musculus (Mouse).